A 328-amino-acid polypeptide reads, in one-letter code: Tryptophan--tRNA ligase (328 aa).

ATP contacts are provided by residues 8 to 10 (RPT) and 16 to 17 (GH). A 'HIGH' region motif is present at residues 9 to 17 (PTGKLHIGH). Asp-136 is an L-tryptophan binding site. ATP-binding positions include 148–150 (GED), Leu-186, and 193–197 (KMSKS). The 'KMSKS' region signature appears at 193 to 197 (KMSKS).

Belongs to the class-I aminoacyl-tRNA synthetase family. In terms of assembly, homodimer.

The protein resides in the cytoplasm. The catalysed reaction is tRNA(Trp) + L-tryptophan + ATP = L-tryptophyl-tRNA(Trp) + AMP + diphosphate + H(+). Its function is as follows. Catalyzes the attachment of tryptophan to tRNA(Trp). The sequence is that of Tryptophan--tRNA ligase from Thermotoga maritima (strain ATCC 43589 / DSM 3109 / JCM 10099 / NBRC 100826 / MSB8).